A 334-amino-acid polypeptide reads, in one-letter code: Probable fructose-bisphosphate aldolase class 1 (334 aa).

Belongs to the class I fructose-bisphosphate aldolase family.

The enzyme catalyses beta-D-fructose 1,6-bisphosphate = D-glyceraldehyde 3-phosphate + dihydroxyacetone phosphate. It participates in carbohydrate degradation; glycolysis; D-glyceraldehyde 3-phosphate and glycerone phosphate from D-glucose: step 4/4. This is Probable fructose-bisphosphate aldolase class 1 from Xanthomonas axonopodis pv. citri (strain 306).